The chain runs to 1796 residues: Y' element ATP-dependent helicase protein 1 copy 5 (1796 aa).

The disordered stretch occupies residues 743–767 (AGEAASSDHDQKISRVTRKRPREPK). The 178-residue stretch at 797 to 974 (EIYMADTPSV…LQRIGLTGLA (178 aa)) folds into the Helicase ATP-binding domain. 810-817 (APPGYGKT) is a binding site for ATP. The Helicase C-terminal domain maps to 1031–1180 (KLLLALFEIE…EFYGLESKKG (150 aa)). 2 disordered regions span residues 1254-1278 (ANASTNATTNSSTNATTTASTNVRT) and 1294-1421 (TTES…DINK). Residues 1294 to 1397 (TTESTNSSTN…ATTTESTNAS (104 aa)) show a composition bias toward low complexity. Positions 1398 to 1421 (AKEDANKDGNAEDNRFHPVTDINK) are enriched in basic and acidic residues.

Belongs to the helicase family. Yeast subtelomeric Y' repeat subfamily.

In terms of biological role, catalyzes DNA unwinding and is involved in telomerase-independent telomere maintenance. This Saccharomyces cerevisiae (strain ATCC 204508 / S288c) (Baker's yeast) protein is Y' element ATP-dependent helicase protein 1 copy 5 (YRF1-5).